The chain runs to 238 residues: Flagellar L-ring protein (238 aa).

The first 16 residues, 1-16 (MNKAILAVAMVLLLAG), serve as a signal peptide directing secretion. C17 is lipidated: N-palmitoyl cysteine. Residue C17 is the site of S-diacylglycerol cysteine attachment.

Belongs to the FlgH family. As to quaternary structure, the basal body constitutes a major portion of the flagellar organelle and consists of four rings (L,P,S, and M) mounted on a central rod.

Its subcellular location is the cell outer membrane. The protein localises to the bacterial flagellum basal body. Functionally, assembles around the rod to form the L-ring and probably protects the motor/basal body from shearing forces during rotation. The protein is Flagellar L-ring protein of Brucella abortus (strain 2308).